A 49-amino-acid chain; its full sequence is DNA-directed RNA polymerase subunit Rpo12 (49 aa).

3 residues coordinate Zn(2+): Cys11, Cys27, and Cys30.

Belongs to the archaeal Rpo12/eukaryotic RPC10 RNA polymerase subunit family. In terms of assembly, part of the RNA polymerase complex. Requires Zn(2+) as cofactor.

It localises to the cytoplasm. The enzyme catalyses RNA(n) + a ribonucleoside 5'-triphosphate = RNA(n+1) + diphosphate. Its function is as follows. DNA-dependent RNA polymerase (RNAP) catalyzes the transcription of DNA into RNA using the four ribonucleoside triphosphates as substrates. The protein is DNA-directed RNA polymerase subunit Rpo12 of Thermococcus onnurineus (strain NA1).